Here is a 295-residue protein sequence, read N- to C-terminus: NAD kinase (295 aa).

D74 acts as the Proton acceptor in catalysis. NAD(+) contacts are provided by residues 74 to 75 (DG), 148 to 149 (ND), H159, R176, D178, and 189 to 194 (TAYALS).

The protein belongs to the NAD kinase family. A divalent metal cation is required as a cofactor.

It localises to the cytoplasm. It catalyses the reaction NAD(+) + ATP = ADP + NADP(+) + H(+). Its function is as follows. Involved in the regulation of the intracellular balance of NAD and NADP, and is a key enzyme in the biosynthesis of NADP. Catalyzes specifically the phosphorylation on 2'-hydroxyl of the adenosine moiety of NAD to yield NADP. The protein is NAD kinase of Legionella pneumophila (strain Corby).